Consider the following 297-residue polypeptide: Dipicolinate synthase subunit A (297 aa).

Residues 164-165 (RT), R185, T203, 242-244 (LAS), and 264-267 (APGL) each bind NADP(+).

As to quaternary structure, dipicolinate synthase likely consists of DpaA and DpaB, since both proteins are required for DPA synthesis.

The enzyme catalyses (S)-2,3-dihydrodipicolinate + NADP(+) = dipicolinate + NADPH + H(+). In terms of biological role, together with DpaB, catalyzes the conversion of dihydrodipicolinate to dipicolinate (DPA), which constitutes up to 10% of the dry weight of the spore. This Bacillus subtilis (strain 168) protein is Dipicolinate synthase subunit A (dpaA).